The following is a 280-amino-acid chain: Large ribosomal subunit protein uL2 (280 aa).

Disordered regions lie at residues 27-58 (STPE…GGGH) and 226-280 (MNPV…KHGR). Composition is skewed to basic residues over residues 37 to 58 (LHGH…GGGH) and 268 to 280 (IVRR…KHGR).

This sequence belongs to the universal ribosomal protein uL2 family. Part of the 50S ribosomal subunit. Forms a bridge to the 30S subunit in the 70S ribosome.

Functionally, one of the primary rRNA binding proteins. Required for association of the 30S and 50S subunits to form the 70S ribosome, for tRNA binding and peptide bond formation. It has been suggested to have peptidyltransferase activity; this is somewhat controversial. Makes several contacts with the 16S rRNA in the 70S ribosome. The sequence is that of Large ribosomal subunit protein uL2 from Mycobacterium marinum (strain ATCC BAA-535 / M).